The sequence spans 362 residues: UDP-N-acetylglucosamine--N-acetylmuramyl-(pentapeptide) pyrophosphoryl-undecaprenol N-acetylglucosamine transferase (362 aa).

UDP-N-acetyl-alpha-D-glucosamine is bound by residues 14–16 (TGG), N122, R163, S190, and Q285.

It belongs to the glycosyltransferase 28 family. MurG subfamily.

The protein localises to the cell inner membrane. It carries out the reaction di-trans,octa-cis-undecaprenyl diphospho-N-acetyl-alpha-D-muramoyl-L-alanyl-D-glutamyl-meso-2,6-diaminopimeloyl-D-alanyl-D-alanine + UDP-N-acetyl-alpha-D-glucosamine = di-trans,octa-cis-undecaprenyl diphospho-[N-acetyl-alpha-D-glucosaminyl-(1-&gt;4)]-N-acetyl-alpha-D-muramoyl-L-alanyl-D-glutamyl-meso-2,6-diaminopimeloyl-D-alanyl-D-alanine + UDP + H(+). Its pathway is cell wall biogenesis; peptidoglycan biosynthesis. Its function is as follows. Cell wall formation. Catalyzes the transfer of a GlcNAc subunit on undecaprenyl-pyrophosphoryl-MurNAc-pentapeptide (lipid intermediate I) to form undecaprenyl-pyrophosphoryl-MurNAc-(pentapeptide)GlcNAc (lipid intermediate II). The chain is UDP-N-acetylglucosamine--N-acetylmuramyl-(pentapeptide) pyrophosphoryl-undecaprenol N-acetylglucosamine transferase from Prochlorococcus marinus (strain MIT 9215).